The sequence spans 325 residues: Tetraacyldisaccharide 4'-kinase (325 aa).

Residue 58–65 (TVGGSGKT) participates in ATP binding.

This sequence belongs to the LpxK family.

It catalyses the reaction a lipid A disaccharide + ATP = a lipid IVA + ADP + H(+). Its pathway is glycolipid biosynthesis; lipid IV(A) biosynthesis; lipid IV(A) from (3R)-3-hydroxytetradecanoyl-[acyl-carrier-protein] and UDP-N-acetyl-alpha-D-glucosamine: step 6/6. In terms of biological role, transfers the gamma-phosphate of ATP to the 4'-position of a tetraacyldisaccharide 1-phosphate intermediate (termed DS-1-P) to form tetraacyldisaccharide 1,4'-bis-phosphate (lipid IVA). The protein is Tetraacyldisaccharide 4'-kinase of Coxiella burnetii (strain CbuG_Q212) (Coxiella burnetii (strain Q212)).